A 241-amino-acid polypeptide reads, in one-letter code: Octanoyltransferase (241 aa).

In terms of domain architecture, BPL/LPL catalytic spans 43–228; sequence ADTPDEIWLV…RLTANLDGSP (186 aa). Substrate is bound by residues 83–90, 159–161, and 172–174; these read RGGQITYH, ALG, and GVS. The active-site Acyl-thioester intermediate is the Cys-190.

The protein belongs to the LipB family.

Its subcellular location is the cytoplasm. The catalysed reaction is octanoyl-[ACP] + L-lysyl-[protein] = N(6)-octanoyl-L-lysyl-[protein] + holo-[ACP] + H(+). It functions in the pathway protein modification; protein lipoylation via endogenous pathway; protein N(6)-(lipoyl)lysine from octanoyl-[acyl-carrier-protein]: step 1/2. In terms of biological role, catalyzes the transfer of endogenously produced octanoic acid from octanoyl-acyl-carrier-protein onto the lipoyl domains of lipoate-dependent enzymes. Lipoyl-ACP can also act as a substrate although octanoyl-ACP is likely to be the physiological substrate. The chain is Octanoyltransferase from Paraburkholderia phytofirmans (strain DSM 17436 / LMG 22146 / PsJN) (Burkholderia phytofirmans).